The chain runs to 417 residues: Gamma-glutamyl phosphate reductase (417 aa).

It belongs to the gamma-glutamyl phosphate reductase family.

Its subcellular location is the cytoplasm. The enzyme catalyses L-glutamate 5-semialdehyde + phosphate + NADP(+) = L-glutamyl 5-phosphate + NADPH + H(+). It participates in amino-acid biosynthesis; L-proline biosynthesis; L-glutamate 5-semialdehyde from L-glutamate: step 2/2. Functionally, catalyzes the NADPH-dependent reduction of L-glutamate 5-phosphate into L-glutamate 5-semialdehyde and phosphate. The product spontaneously undergoes cyclization to form 1-pyrroline-5-carboxylate. In Heliobacterium modesticaldum (strain ATCC 51547 / Ice1), this protein is Gamma-glutamyl phosphate reductase.